We begin with the raw amino-acid sequence, 565 residues long: UV-stimulated scaffold protein A homolog (565 aa).

The VHS-like stretch occupies residues 11–156 (RKNLNRILQE…VTLRKTKFVD (146 aa)). The stretch at 155 to 215 (VDYENGEKKI…ELETTMEMLV (61 aa)) forms a coiled coil. The segment at 441–468 (DRECLAKLPSGALCKRKDMFKCPLHGPL) adopts a UVSSA-type zinc-finger fold. Residues Cys-444, Cys-454, Cys-462, and His-465 each contribute to the Zn(2+) site. The stretch at 480 to 510 (DEDRLKEIDRKERKRLKEAEEFSRKIVKEYE) forms a coiled coil. Disordered regions lie at residues 510-530 (ESKT…SRLQ) and 542-565 (VSAD…FSHL).

It belongs to the UVSSA family.

The protein resides in the chromosome. Its function is as follows. Factor involved in transcription-coupled nucleotide excision repair (TC-NER) in response to UV damage. TC-NER allows RNA polymerase II-blocking lesions to be rapidly removed from the transcribed strand of active genes. This chain is UV-stimulated scaffold protein A homolog, found in Caenorhabditis briggsae.